The chain runs to 37 residues: Large ribosomal subunit protein bL36 (37 aa).

Belongs to the bacterial ribosomal protein bL36 family.

The chain is Large ribosomal subunit protein bL36 from Chromohalobacter salexigens (strain ATCC BAA-138 / DSM 3043 / CIP 106854 / NCIMB 13768 / 1H11).